The following is a 355-amino-acid chain: Uroporphyrinogen decarboxylase (355 aa).

Substrate contacts are provided by residues 27–31 (RQAGR), aspartate 77, tyrosine 154, threonine 209, and histidine 327.

Belongs to the uroporphyrinogen decarboxylase family. In terms of assembly, homodimer.

It localises to the cytoplasm. The catalysed reaction is uroporphyrinogen III + 4 H(+) = coproporphyrinogen III + 4 CO2. Its pathway is porphyrin-containing compound metabolism; protoporphyrin-IX biosynthesis; coproporphyrinogen-III from 5-aminolevulinate: step 4/4. Its function is as follows. Catalyzes the decarboxylation of four acetate groups of uroporphyrinogen-III to yield coproporphyrinogen-III. The chain is Uroporphyrinogen decarboxylase from Erwinia tasmaniensis (strain DSM 17950 / CFBP 7177 / CIP 109463 / NCPPB 4357 / Et1/99).